The following is a 61-amino-acid chain: Large ribosomal subunit protein bL28 (61 aa).

Belongs to the bacterial ribosomal protein bL28 family.

This Lachnospira eligens (strain ATCC 27750 / DSM 3376 / VPI C15-48 / C15-B4) (Eubacterium eligens) protein is Large ribosomal subunit protein bL28.